Here is a 241-residue protein sequence, read N- to C-terminus: Spheroidene monooxygenase (241 aa).

It belongs to the CrtA family. Heme serves as cofactor.

It carries out the reaction spheroidene + 4 reduced [2Fe-2S]-[ferredoxin] + 2 O2 + 4 H(+) = spheroiden-2-one + 4 oxidized [2Fe-2S]-[ferredoxin] + 3 H2O. The enzyme catalyses spirilloxanthin + 4 reduced [2Fe-2S]-[ferredoxin] + 2 O2 + 4 H(+) = 2-oxospirilloxanthin + 4 oxidized [2Fe-2S]-[ferredoxin] + 3 H2O. The catalysed reaction is 2-oxospirilloxanthin + 4 reduced [2Fe-2S]-[ferredoxin] + 2 O2 + 4 H(+) = 2,2'-dioxospirilloxanthin + 4 oxidized [2Fe-2S]-[ferredoxin] + 3 H2O. It catalyses the reaction spheroidene + 2 reduced [2Fe-2S]-[ferredoxin] + O2 + 2 H(+) = 2-hydroxyspheroidene + 2 oxidized [2Fe-2S]-[ferredoxin] + H2O. It carries out the reaction 2-hydroxyspheroidene + 2 reduced [2Fe-2S]-[ferredoxin] + O2 + 2 H(+) = 2,2-dihydroxyspheroidene + 2 oxidized [2Fe-2S]-[ferredoxin] + H2O. The enzyme catalyses 2,2-dihydroxyspheroidene = spheroiden-2-one + H2O. The catalysed reaction is spirilloxanthin + 2 reduced [2Fe-2S]-[ferredoxin] + O2 + 2 H(+) = 2-hydroxyspirilloxanthin + 2 oxidized [2Fe-2S]-[ferredoxin] + H2O. It catalyses the reaction 2-hydroxyspirilloxanthin + 2 reduced [2Fe-2S]-[ferredoxin] + O2 + 2 H(+) = 2,2-dihydroxyspirilloxanthin + 2 oxidized [2Fe-2S]-[ferredoxin] + H2O. It carries out the reaction 2,2-dihydroxyspirilloxanthin = 2-oxospirilloxanthin + H2O. The enzyme catalyses 2-oxospirilloxanthin + 2 reduced [2Fe-2S]-[ferredoxin] + O2 + 2 H(+) = 2'-hydroxy-2-oxospirilloxanthin + 2 oxidized [2Fe-2S]-[ferredoxin] + H2O. The catalysed reaction is 2'-hydroxy-2-oxospirilloxanthin + 2 reduced [2Fe-2S]-[ferredoxin] + O2 + 2 H(+) = 2',2'-dihydroxy-2-oxospirilloxanthin + 2 oxidized [2Fe-2S]-[ferredoxin] + H2O. It catalyses the reaction 2',2'-dihydroxy-2-oxospirilloxanthin = 2,2'-dioxospirilloxanthin + H2O. It participates in carotenoid biosynthesis; spheroidene biosynthesis. Its function is as follows. Involved in the biosynthesis of the carotenoid spheroidene. Catalyzes the introduction of one keto group at the C-2 position of spheroidene. In vitro, can also catalyze the introduction of two keto groups at the C-2 and C-2' positions of spirilloxanthin, but spirilloxanthin biosynthesis pathway is not present in R.capsulatus. The protein is Spheroidene monooxygenase of Rhodobacter capsulatus (strain ATCC BAA-309 / NBRC 16581 / SB1003).